The chain runs to 131 residues: Large ribosomal subunit protein bL17 (131 aa).

This sequence belongs to the bacterial ribosomal protein bL17 family. Part of the 50S ribosomal subunit. Contacts protein L32.

The chain is Large ribosomal subunit protein bL17 from Methylibium petroleiphilum (strain ATCC BAA-1232 / LMG 22953 / PM1).